The primary structure comprises 352 residues: Glycoprotein integral membrane protein 1 (352 aa).

The first 25 residues, 1–25 (MASRCKIHLTVAYLLILCILASAQS), serve as a signal peptide directing secretion. Over 26 to 281 (KQMTTETVVL…KLRRFLSDSV (256 aa)) the chain is Extracellular. N-linked (GlcNAc...) asparagine glycans are attached at residues Asn-36, Asn-44, Asn-89, Asn-109, Asn-151, and Asn-197. A disordered region spans residues 206-245 (NSETTQEEIAAPGKLPETPLRMDPETLYESREEEERRSDS). The segment covering 225–244 (LRMDPETLYESREEEERRSD) has biased composition (basic and acidic residues). Residues 282-302 (PLFFLVMWVVVVGVAGSAVVI) form a helical membrane-spanning segment. At 303-352 (KILDLIFPSCEHRGFFHLNPETLMPDDEKVSLIDNMEGDMTEKSILLIEK) the chain is on the cytoplasmic side.

The protein resides in the membrane. The chain is Glycoprotein integral membrane protein 1 (ginm1) from Danio rerio (Zebrafish).